The following is a 227-amino-acid chain: Ribonuclease 3 (227 aa).

In terms of domain architecture, RNase III spans 4–126; the sequence is LDRLERKIGY…IIGAMSLDQG (123 aa). Glu-39 is a binding site for Mg(2+). Residue Asp-43 is part of the active site. Mg(2+) is bound by residues Asp-112 and Glu-115. Glu-115 is a catalytic residue. One can recognise a DRBM domain in the interval 153 to 226; that stretch reads DAKTRLQEYL…AEQILKELDI (74 aa).

This sequence belongs to the ribonuclease III family. In terms of assembly, homodimer. Mg(2+) serves as cofactor.

Its subcellular location is the cytoplasm. It catalyses the reaction Endonucleolytic cleavage to 5'-phosphomonoester.. Its function is as follows. Digests double-stranded RNA. Involved in the processing of primary rRNA transcript to yield the immediate precursors to the large and small rRNAs (23S and 16S). Processes some mRNAs, and tRNAs when they are encoded in the rRNA operon. Processes pre-crRNA and tracrRNA of type II CRISPR loci if present in the organism. The polypeptide is Ribonuclease 3 (Haemophilus influenzae (strain PittGG)).